The primary structure comprises 209 residues: Pyridoxine/pyridoxamine 5'-phosphate oxidase (209 aa).

FMN is bound by residues 57 to 62 (RMVLLK), 72 to 73 (YT), Lys79, and Gln101. Substrate is bound at residue Lys62. Substrate is bound by residues Tyr119, Arg123, and Ser127. FMN is bound by residues 136-137 (QS) and Trp181. Residue 187-189 (RLH) coordinates substrate. Residue Arg191 coordinates FMN.

It belongs to the pyridoxamine 5'-phosphate oxidase family. As to quaternary structure, homodimer. FMN is required as a cofactor.

It carries out the reaction pyridoxamine 5'-phosphate + O2 + H2O = pyridoxal 5'-phosphate + H2O2 + NH4(+). The enzyme catalyses pyridoxine 5'-phosphate + O2 = pyridoxal 5'-phosphate + H2O2. Its pathway is cofactor metabolism; pyridoxal 5'-phosphate salvage; pyridoxal 5'-phosphate from pyridoxamine 5'-phosphate: step 1/1. It participates in cofactor metabolism; pyridoxal 5'-phosphate salvage; pyridoxal 5'-phosphate from pyridoxine 5'-phosphate: step 1/1. Catalyzes the oxidation of either pyridoxine 5'-phosphate (PNP) or pyridoxamine 5'-phosphate (PMP) into pyridoxal 5'-phosphate (PLP). This chain is Pyridoxine/pyridoxamine 5'-phosphate oxidase, found in Chelativorans sp. (strain BNC1).